We begin with the raw amino-acid sequence, 376 residues long: UDP-N-acetylglucosamine--N-acetylmuramyl-(pentapeptide) pyrophosphoryl-undecaprenol N-acetylglucosamine transferase (376 aa).

UDP-N-acetyl-alpha-D-glucosamine is bound by residues 12–14 (TGG), Asn-125, Arg-165, Ser-197, and Gln-296.

This sequence belongs to the glycosyltransferase 28 family. MurG subfamily.

It is found in the cell inner membrane. It carries out the reaction di-trans,octa-cis-undecaprenyl diphospho-N-acetyl-alpha-D-muramoyl-L-alanyl-D-glutamyl-meso-2,6-diaminopimeloyl-D-alanyl-D-alanine + UDP-N-acetyl-alpha-D-glucosamine = di-trans,octa-cis-undecaprenyl diphospho-[N-acetyl-alpha-D-glucosaminyl-(1-&gt;4)]-N-acetyl-alpha-D-muramoyl-L-alanyl-D-glutamyl-meso-2,6-diaminopimeloyl-D-alanyl-D-alanine + UDP + H(+). Its pathway is cell wall biogenesis; peptidoglycan biosynthesis. Cell wall formation. Catalyzes the transfer of a GlcNAc subunit on undecaprenyl-pyrophosphoryl-MurNAc-pentapeptide (lipid intermediate I) to form undecaprenyl-pyrophosphoryl-MurNAc-(pentapeptide)GlcNAc (lipid intermediate II). The polypeptide is UDP-N-acetylglucosamine--N-acetylmuramyl-(pentapeptide) pyrophosphoryl-undecaprenol N-acetylglucosamine transferase (Protochlamydia amoebophila (strain UWE25)).